Here is a 140-residue protein sequence, read N- to C-terminus: uncharacterized protein (140 aa).

The stretch at 27-65 forms a coiled coil; the sequence is LLGEVSELELQKICFNRSLRNEINQLEEQNDISFVRVER.

This is an uncharacterized protein from Pasteurella multocida (strain Pm70).